Consider the following 763-residue polypeptide: Phosphoglycerol transferase I (763 aa).

The next 4 helical transmembrane spans lie at 1 to 21 (MSEL…AWKA), 26 to 46 (WWFA…ITLY), 77 to 97 (ILPG…LGWI), and 108 to 128 (FGYS…SPAF).

Belongs to the OpgB family.

The protein resides in the cell inner membrane. It carries out the reaction a phosphatidylglycerol + a membrane-derived-oligosaccharide D-glucose = a 1,2-diacyl-sn-glycerol + a membrane-derived-oligosaccharide 6-(glycerophospho)-D-glucose.. Its pathway is glycan metabolism; osmoregulated periplasmic glucan (OPG) biosynthesis. In terms of biological role, transfers a phosphoglycerol residue from phosphatidylglycerol to the membrane-bound nascent glucan backbones. The sequence is that of Phosphoglycerol transferase I from Escherichia fergusonii (strain ATCC 35469 / DSM 13698 / CCUG 18766 / IAM 14443 / JCM 21226 / LMG 7866 / NBRC 102419 / NCTC 12128 / CDC 0568-73).